Here is a 218-residue protein sequence, read N- to C-terminus: Serine/threonine-protein phosphatase 2 (218 aa).

Residues aspartate 22, histidine 24, aspartate 51, and asparagine 77 each coordinate Mn(2+). Histidine 78 serves as the catalytic Proton donor. Residue histidine 187 coordinates Mn(2+).

The protein belongs to the PPP phosphatase family. Mn(2+) is required as a cofactor.

It carries out the reaction O-phospho-L-seryl-[protein] + H2O = L-seryl-[protein] + phosphate. It catalyses the reaction O-phospho-L-threonyl-[protein] + H2O = L-threonyl-[protein] + phosphate. In terms of biological role, has been shown, in vitro, to act on Ser, Thr and Tyr-phosphorylated substrates. This chain is Serine/threonine-protein phosphatase 2 (pphB), found in Escherichia coli (strain K12).